A 314-amino-acid chain; its full sequence is Deoxymugineic acid synthase 1 (314 aa).

Asp-44 lines the NADP(+) pocket. Tyr-49 serves as the catalytic Proton donor. Residue His-112 participates in substrate binding. Residues 158–159 (CN), Gln-180, 258–266 (FDEGRMKEN), and 273–281 (ELSEEERQR) each bind NADP(+).

Belongs to the aldo/keto reductase family.

The enzyme catalyses 2'-deoxymugineate + NAD(+) = 3''-deamino-3''-oxonicotianamine + NADH + H(+). The catalysed reaction is 2'-deoxymugineate + NADP(+) = 3''-deamino-3''-oxonicotianamine + NADPH + H(+). It functions in the pathway siderophore biosynthesis. Catalyzes the reduction of a 3''-keto intermediate during the biosynthesis of 2'-deoxymugineic acid (DMA) from L-Met. Involved in the formation of phytosiderophores (MAs) belonging to the mugineic acid family and required to acquire iron. This Zea mays (Maize) protein is Deoxymugineic acid synthase 1.